Reading from the N-terminus, the 180-residue chain is Large ribosomal subunit protein uL5 (180 aa).

Belongs to the universal ribosomal protein uL5 family. Part of the 50S ribosomal subunit; part of the 5S rRNA/L5/L18/L25 subcomplex. Contacts the 5S rRNA and the P site tRNA. Forms a bridge to the 30S subunit in the 70S ribosome.

This is one of the proteins that bind and probably mediate the attachment of the 5S RNA into the large ribosomal subunit, where it forms part of the central protuberance. In the 70S ribosome it contacts protein S13 of the 30S subunit (bridge B1b), connecting the 2 subunits; this bridge is implicated in subunit movement. Contacts the P site tRNA; the 5S rRNA and some of its associated proteins might help stabilize positioning of ribosome-bound tRNAs. The protein is Large ribosomal subunit protein uL5 of Streptococcus uberis (strain ATCC BAA-854 / 0140J).